A 316-amino-acid chain; its full sequence is UDP-N-acetylenolpyruvoylglucosamine reductase (316 aa).

The FAD-binding PCMH-type domain maps to 30–194 (VGGEADYLVF…LSVKFALAPG (165 aa)). Arg173 is a catalytic residue. The Proton donor role is filled by Ser223. Glu293 is a catalytic residue.

The protein belongs to the MurB family. It depends on FAD as a cofactor.

The protein resides in the cytoplasm. The enzyme catalyses UDP-N-acetyl-alpha-D-muramate + NADP(+) = UDP-N-acetyl-3-O-(1-carboxyvinyl)-alpha-D-glucosamine + NADPH + H(+). Its pathway is cell wall biogenesis; peptidoglycan biosynthesis. Functionally, cell wall formation. The polypeptide is UDP-N-acetylenolpyruvoylglucosamine reductase (Streptococcus pneumoniae serotype 2 (strain D39 / NCTC 7466)).